We begin with the raw amino-acid sequence, 937 residues long: Protein SEY1 homolog (937 aa).

The Cytoplasmic portion of the chain corresponds to 1 to 848 (MEKGVEKTQI…ETGSKMSLKN (848 aa)). The GB1/RHD3-type G domain occupies 34-280 (GFSYNVIAVL…IPSDGFAQYC (247 aa)). 44–51 (GSQSSGKS) is a binding site for GTP. Coiled coils occupy residues 319 to 339 (NKEI…NFKE) and 725 to 750 (YLDE…IIIQ). The chain crosses the membrane as a helical span at residues 849–869 (VPVVFWIILLLFGWNEILFFI). Topologically, residues 870 to 872 (RMF) are lumenal. A helical transmembrane segment spans residues 873 to 893 (FKLNVILPLFFAAAFIVSTFV). Residues 894–937 (YNGNTQALSYINKIIFYMAKNSYNFFKHIQAISNPPPKNVQKQE) are Cytoplasmic-facing.

This sequence belongs to the TRAFAC class dynamin-like GTPase superfamily. GB1/RHD3 GTPase family. RHD3 subfamily.

It localises to the endoplasmic reticulum membrane. Functionally, probable GTP-binding protein involved in generating and maintaining the structure of the tubular endoplasmic reticulum network. The sequence is that of Protein SEY1 homolog from Plasmodium falciparum (isolate 3D7).